The primary structure comprises 911 residues: Alpha-actinin-4 (911 aa).

The interval 1–269 (MVDYHAANQS…YVSSFYHAFS (269 aa)) is actin-binding. The interaction with VCL stretch occupies residues 12–26 (QYGPSSAGNGAGGGG). At Tyr31 the chain carries Phosphotyrosine. An interaction with VCL region spans residues 40–61 (RDLLLDPAWEKQQRKTFTAWCN). 2 Calponin-homology (CH) domains span residues 50–154 (KQQR…LRFA) and 163–269 (TSAK…HAFS). Residues 84–88 (LMLLL) carry the LXXLL motif motif. Residues 108–126 (KINNVNKALDFIASKGVKL) are interaction with VCL. The residue at position 114 (Lys114) is an N6-acetyllysine. The polyphosphoinositide (PIP2)-binding stretch occupies residues 177–192 (TAPYKNVNVQNFHISW). N6-acetyllysine is present on Lys214. A Phosphothreonine modification is found at Thr249. 4 Spectrin repeats span residues 293 to 403 (HLME…WLLN), 413 to 518 (HLAE…ALEK), 528 to 639 (QLHL…ALLE), and 649 to 752 (HLRR…EVEN). 2 positions are modified to N6-acetyllysine: Lys592 and Lys625. Phosphoserine is present on Ser696. The segment at 736 to 911 (WEQLLTTIAR…STALYGESDL (176 aa)) is mediates interaction with MICALL2. EF-hand domains lie at 765 to 800 (EQMQ…LGYD) and 806 to 841 (QGEA…ETTD). Asp778 contributes to the Ca(2+) binding site. Residue Lys779 is modified to N6-acetyllysine. The Ca(2+) site is built by Asp780 and Glu789. Lys859 carries the N6-acetyllysine modification. Ser909 carries the post-translational modification Phosphoserine.

This sequence belongs to the alpha-actinin family. Homodimer; antiparallel. Binds TRIM3 at the N-terminus. Interacts with MICALL2 (preferentially in opened conformation); stimulated by RAB13 activation. Identified in a complex with CASK, IQGAP1, MAGI2, NPHS1, SPTAN1 and SPTBN1. Identified in a IGF2BP1-dependent mRNP granule complex containing untranslated mRNAs. Component of the CART complex, at least composed of ACTN4, HGS/HRS, MYO5B and TRIM3. Interacts with MAGI1. Interacts with PDLIM2. Interacts with PPARG and RARA. Binds to VCL; this interaction triggers VCL conformational changes. Interacts with SEPTIN14. Interacts with IGSF8. Widely expressed.

It localises to the nucleus. Its subcellular location is the cytoplasm. The protein resides in the cell junction. The protein localises to the cytoskeleton. It is found in the stress fiber. It localises to the perinuclear region. Its function is as follows. F-actin cross-linking protein which is thought to anchor actin to a variety of intracellular structures. This is a bundling protein. Probably involved in vesicular trafficking via its association with the CART complex. The CART complex is necessary for efficient transferrin receptor recycling but not for EGFR degradation. Involved in tight junction assembly in epithelial cells probably through interaction with MICALL2. Links MICALL2 to the actin cytoskeleton and recruits it to the tight junctions. May also function as a transcriptional coactivator, stimulating transcription mediated by the nuclear hormone receptors PPARG and RARA. Association with IGSF8 regulates the immune synapse formation and is required for efficient T-cell activation. The sequence is that of Alpha-actinin-4 from Homo sapiens (Human).